The sequence spans 565 residues: DNA primase (565 aa).

Residues 37 to 61 (CPFHSETNPSFYVHPGLKIYHCFGC) form a CHC2-type zinc finger. A Toprim domain is found at 248–329 (GFFVITEGYF…NVLVATPSPY (82 aa)). The Mg(2+) site is built by Glu254, Asp298, and Asp300.

The protein belongs to the DnaG primase family. As to quaternary structure, monomer. Interacts with DnaB. Zn(2+) is required as a cofactor. Mg(2+) serves as cofactor.

It catalyses the reaction ssDNA + n NTP = ssDNA/pppN(pN)n-1 hybrid + (n-1) diphosphate.. RNA polymerase that catalyzes the synthesis of short RNA molecules used as primers for DNA polymerase during DNA replication. The chain is DNA primase from Thermotoga maritima (strain ATCC 43589 / DSM 3109 / JCM 10099 / NBRC 100826 / MSB8).